We begin with the raw amino-acid sequence, 291 residues long: Quinol oxidase subunit 2 (291 aa).

The N-terminal stretch at Met-1–Lys-28 is a signal peptide. 2 helical membrane-spanning segments follow: residues Ser-49 to Ile-69 and Leu-91 to Val-111.

It belongs to the cytochrome c oxidase subunit 2 family.

The protein localises to the cell membrane. It catalyses the reaction 2 a quinol + O2 = 2 a quinone + 2 H2O. Functionally, catalyzes quinol oxidation with the concomitant reduction of oxygen to water. Subunit II transfers the electrons from a quinol to the binuclear center of the catalytic subunit I. This Bacillus cereus (strain ATCC 14579 / DSM 31 / CCUG 7414 / JCM 2152 / NBRC 15305 / NCIMB 9373 / NCTC 2599 / NRRL B-3711) protein is Quinol oxidase subunit 2.